The following is a 67-amino-acid chain: Large ribosomal subunit protein uL30 (67 aa).

The protein belongs to the universal ribosomal protein uL30 family. As to quaternary structure, part of the 50S ribosomal subunit.

The chain is Large ribosomal subunit protein uL30 from Sorangium cellulosum (strain So ce56) (Polyangium cellulosum (strain So ce56)).